The following is a 696-amino-acid chain: D-(-)-3-hydroxybutyrate oligomer hydrolase (696 aa).

Positions 1–26 (MDTHGWGSRILVGAALAALTMLGACN) are cleaved as a signal peptide. Serine 309 (charge relay system) is an active-site residue.

It belongs to the D-(-)-3-hydroxybutyrate oligomer hydrolase family.

The protein resides in the secreted. The enzyme catalyses (3R)-hydroxybutanoate dimer + H2O = 2 (R)-3-hydroxybutanoate + H(+). The protein operates within lipid metabolism; butanoate metabolism. Its function is as follows. Participates in the degradation of poly-3-hydroxybutyrate (PHB). It works downstream of poly(3-hydroxybutyrate) depolymerase, hydrolyzing D(-)-3-hydroxybutyrate oligomers of various length (3HB-oligomers) into 3HB-monomers. The polypeptide is D-(-)-3-hydroxybutyrate oligomer hydrolase (Burkholderia vietnamiensis (strain G4 / LMG 22486) (Burkholderia cepacia (strain R1808))).